The chain runs to 622 residues: Iron transport multicopper oxidase fetC (622 aa).

A signal peptide spans M1 to A20. Topologically, residues A21–R552 are extracellular. N-linked (GlcNAc...) asparagine glycans are attached at residues N28 and N74. 2 consecutive Plastocyanin-like domains span residues V29–P144 and E154–K301. Positions 80 and 82 each coordinate Cu cation. Residues N87 and N112 are each glycosylated (N-linked (GlcNAc...) asparagine). Cu cation is bound by residues H124 and H126. 5 N-linked (GlcNAc...) asparagine glycosylation sites follow: N194, N198, N265, N292, and N358. One can recognise a Plastocyanin-like 3 domain in the interval K362–P497. Positions 412, 415, and 417 each coordinate Cu cation. N428 carries N-linked (GlcNAc...) asparagine glycosylation. Positions 478, 479, 480, and 484 each coordinate Cu cation. Residues G553–W573 traverse the membrane as a helical segment. The Cytoplasmic portion of the chain corresponds to Y574 to T622. Residues T597–T622 are disordered.

The protein belongs to the multicopper oxidase family.

Its subcellular location is the cell membrane. In terms of biological role, cell surface ferroxidase; part of the reductive iron assimilatory system (RIA), a siderophore-independent high affinity iron uptake mechanism. Required to oxidize Fe(2+) and release it from the transporter. The sequence is that of Iron transport multicopper oxidase fetC from Epichloe festucae (strain E2368).